A 644-amino-acid chain; its full sequence is MFQDNPLLAQLKQQLHSKTPRVEGVVKGTDKGFGFLEADGQKSYFIPPPHMKKVMHGDRITATLHTEKDREIVEPETLIEPFLTRFVGRIHKKDDRLSITPDHPLLKEAIPCRAARDVTDDFQEGDWAVAEMRRHPLKGDRGFHAELTQYITTGDDPLVPWWVTLSRHNLERSAPEVETTERHDGELVREDLTALNFVTIDSASTEDMDDALYVQDNGDGSLQLTIAIADPTAYVDAGSELDNIARQRAFTNYLPGFNIPMLPRALSDDICSLRPNERRPVLACRVTIAADGALGDDIHFFAASIESKAKLAYDNVSDWLENQGEWQPQNEEIAEQIRLLHRLCLARSEWRTTHALVFKDRPDYRFLLGEKGEVLDIVVEHRRIANRIVEESMIAANVCAAIVLRDKLGFGIYNVHNGFDPASIEQAVAVLDTHGVQADAQTLLTLDGFCTLRRELDAQPTQFLDSRIRRFQSFAEVSTTPGPHFGLGLEAYATWTSPIRKYGDMVNHRLLKAVITGQAAEKPQDDVTVQLAERRRLNRMAERDVGDWLYARYLKDKAGTDIRFNAEIIDVTRGGLRVRLLDNGAVVFIPSSFIHAVRDELVCSQEMGTLSVKGEVVYRQGDTLDVIIAEVRLETRGIVAKPAA.

The RNB domain maps to 189–516 (REDLTALNFV…NHRLLKAVIT (328 aa)). In terms of domain architecture, S1 motif spans 561-643 (DIRFNAEIID…ETRGIVAKPA (83 aa)).

The protein belongs to the RNR ribonuclease family. RNase II subfamily.

The protein resides in the cytoplasm. It catalyses the reaction Exonucleolytic cleavage in the 3'- to 5'-direction to yield nucleoside 5'-phosphates.. Involved in mRNA degradation. Hydrolyzes single-stranded polyribonucleotides processively in the 3' to 5' direction. This chain is Exoribonuclease 2, found in Pectobacterium atrosepticum (strain SCRI 1043 / ATCC BAA-672) (Erwinia carotovora subsp. atroseptica).